A 314-amino-acid polypeptide reads, in one-letter code: MTALILKRVAQAIPVMLIVAILTFLLMKLLPGDPAILIAGDGASPETVERIRVELGLDQPTVVQLGQWLWNLFHFDLGRSFLLSQPVSQAIAERLPVTISLALLAFAITIPVGIIMGVVAAYLRDSWFDTGVMSLALLGVSVPSFWLAILAVILFSVTLGWFPSAGYVPFLDSPLGWLRSLILPASILALFQIGYLARMTRSEMLEVMDQDYIRTARSKGVSEYSVLSTHAFRNALVSVLTVSGYIFSLLIGGSVVIEQIFALPGLGRLLVQAILARDLPVVQGTMLFLGFLFVAINVLVDILYTIADPRVRYD.

6 helical membrane passes run 12-32, 101-121, 135-155, 177-197, 237-257, and 286-306; these read AIPVMLIVAILTFLLMKLLPG, LALLAFAITIPVGIIMGVVAA, LALLGVSVPSFWLAILAVILF, WLRSLILPASILALFQIGYLA, VSVLTVSGYIFSLLIGGSVVI, and MLFLGFLFVAINVLVDILYTI. The region spanning 95–304 is the ABC transmembrane type-1 domain; sequence LPVTISLALL…AINVLVDILY (210 aa).

The protein belongs to the binding-protein-dependent transport system permease family. The complex is composed of two ATP-binding proteins (BruAb2_1033 and BruAb2_1034), two transmembrane proteins (BruAb2_1031 and BruAb2_1032) and a solute-binding protein (BruAb2_1030).

The protein localises to the cell inner membrane. Its function is as follows. Probably part of an ABC transporter complex that could be involved in peptide import. Probably responsible for the translocation of the substrate across the membrane. The protein is Putative peptide transport system permease protein BruAb2_1031 of Brucella abortus biovar 1 (strain 9-941).